The primary structure comprises 123 residues: UPF0102 protein Cbei_1183 (123 aa).

The protein belongs to the UPF0102 family.

The protein is UPF0102 protein Cbei_1183 of Clostridium beijerinckii (strain ATCC 51743 / NCIMB 8052) (Clostridium acetobutylicum).